The chain runs to 703 residues: DNA ligase (703 aa).

NAD(+) contacts are provided by residues 44 to 48 (DAEYD), 93 to 94 (SL), and Glu127. Residue Lys129 is the N6-AMP-lysine intermediate of the active site. The NAD(+) site is built by Arg150, Glu186, Lys302, and Lys326. Cys420, Cys422, Cys444, and Cys450 together coordinate Zn(2+). One can recognise a BRCT domain in the interval 625 to 703 (VADSPVAGKT…EDMWFQRIGA (79 aa)).

It belongs to the NAD-dependent DNA ligase family. LigA subfamily. Mg(2+) serves as cofactor. Requires Mn(2+) as cofactor.

The catalysed reaction is NAD(+) + (deoxyribonucleotide)n-3'-hydroxyl + 5'-phospho-(deoxyribonucleotide)m = (deoxyribonucleotide)n+m + AMP + beta-nicotinamide D-nucleotide.. In terms of biological role, DNA ligase that catalyzes the formation of phosphodiester linkages between 5'-phosphoryl and 3'-hydroxyl groups in double-stranded DNA using NAD as a coenzyme and as the energy source for the reaction. It is essential for DNA replication and repair of damaged DNA. The sequence is that of DNA ligase from Chelativorans sp. (strain BNC1).